The primary structure comprises 253 residues: MTEFVVLIPARLDSSRLPGKALADIHGKPMVVRVAEQAAKSKAARVVVATDHPDIQTACQAHGIEVVMTSNRHESGTTRLAEAAAALKLPPHLIVVNVQGDEPLIAPELIDRTAEVLVENNVQMATAGHELHDFDELMNPNAVKVVLDKNGNAIYFSRAPIPYPRDAMRAGKREMPSETAVLRHIGIYAYRVGFLQRYAEMSVSPLETIESLEQLRVLWHGYPIAVETAKEAPAAGVDTQEDLDRVRAVFQTV.

It belongs to the KdsB family.

It is found in the cytoplasm. The catalysed reaction is 3-deoxy-alpha-D-manno-oct-2-ulosonate + CTP = CMP-3-deoxy-beta-D-manno-octulosonate + diphosphate. The protein operates within nucleotide-sugar biosynthesis; CMP-3-deoxy-D-manno-octulosonate biosynthesis; CMP-3-deoxy-D-manno-octulosonate from 3-deoxy-D-manno-octulosonate and CTP: step 1/1. It participates in bacterial outer membrane biogenesis; lipopolysaccharide biosynthesis. In terms of biological role, activates KDO (a required 8-carbon sugar) for incorporation into bacterial lipopolysaccharide in Gram-negative bacteria. This is 3-deoxy-manno-octulosonate cytidylyltransferase from Neisseria gonorrhoeae (strain ATCC 700825 / FA 1090).